The chain runs to 385 residues: tRNA-specific 2-thiouridylase MnmA (385 aa).

ATP is bound by residues 18 to 25 (AMSGGVDS) and L44. The Nucleophile role is filled by C112. A disulfide bridge links C112 with C209. An ATP-binding site is contributed by G136. An interaction with tRNA region spans residues 159–161 (RDQ). C209 serves as the catalytic Cysteine persulfide intermediate.

This sequence belongs to the MnmA/TRMU family.

The protein localises to the cytoplasm. It catalyses the reaction S-sulfanyl-L-cysteinyl-[protein] + uridine(34) in tRNA + AH2 + ATP = 2-thiouridine(34) in tRNA + L-cysteinyl-[protein] + A + AMP + diphosphate + H(+). In terms of biological role, catalyzes the 2-thiolation of uridine at the wobble position (U34) of tRNA, leading to the formation of s(2)U34. The polypeptide is tRNA-specific 2-thiouridylase MnmA (Methylorubrum extorquens (strain PA1) (Methylobacterium extorquens)).